Reading from the N-terminus, the 483-residue chain is Shutoff alkaline exonuclease (483 aa).

The protein belongs to the herpesviridae alkaline nuclease family. In terms of assembly, forms a complex with the DNA polymerase, the DNA polymerase processivity factor, and the major DNA binding protein.

It is found in the host nucleus. The protein resides in the host cytoplasm. In terms of biological role, plays a role in processing non linear or branched viral DNA intermediates in order to promote the production of mature packaged unit-length linear progeny viral DNA molecules. Exhibits endonuclease and exonuclease activities and accepts both double-stranded and single-stranded DNA as substrate. Exonuclease digestion of DNA is in the 5'-&gt; 3' direction and the products are 5'-monophosphate nucleosides. Additionally, forms a recombinase with the major DNA-binding protein, which displays strand exchange activity. Also acts as a cytoplasmic RNA endonuclease that induces degradation of the majority of the cellular messenger RNAs during early lytic infection. The resulting inhibition of cellular protein synthesis serves to ensure maximal viral gene expression and evasion from host immune response. Internally cleaves host mRNAs which are then degraded by the cellular exonuclease XRN1. Bypasses therefore the regulatory steps of deadenylation and decapping normally required for XRN1 activation. The polypeptide is Shutoff alkaline exonuclease (37) (Saimiriine herpesvirus 2 (strain 11) (SaHV-2)).